The following is a 131-amino-acid chain: Small ribosomal subunit protein uS11 (131 aa).

It belongs to the universal ribosomal protein uS11 family. Part of the 30S ribosomal subunit. Interacts with proteins S7 and S18. Binds to IF-3.

Its function is as follows. Located on the platform of the 30S subunit, it bridges several disparate RNA helices of the 16S rRNA. Forms part of the Shine-Dalgarno cleft in the 70S ribosome. The chain is Small ribosomal subunit protein uS11 from Deinococcus deserti (strain DSM 17065 / CIP 109153 / LMG 22923 / VCD115).